We begin with the raw amino-acid sequence, 269 residues long: Eukaryotic translation initiation factor 3 subunit G-1 (269 aa).

Residues 188 to 266 enclose the RRM domain; sequence AAIRISNLSE…LILSVEWSKP (79 aa).

It belongs to the eIF-3 subunit G family. As to quaternary structure, component of the eukaryotic translation initiation factor 3 (eIF-3) complex. The eIF-3 complex interacts with pix.

The protein resides in the cytoplasm. Functionally, RNA-binding component of the eukaryotic translation initiation factor 3 (eIF-3) complex, which is involved in protein synthesis of a specialized repertoire of mRNAs and, together with other initiation factors, stimulates binding of mRNA and methionyl-tRNAi to the 40S ribosome. The eIF-3 complex specifically targets and initiates translation of a subset of mRNAs involved in cell proliferation. This subunit can bind 18S rRNA. The protein is Eukaryotic translation initiation factor 3 subunit G-1 of Drosophila willistoni (Fruit fly).